The chain runs to 485 residues: Rhamnulokinase (485 aa).

Residue 8-12 (ASSGR) coordinates ATP. Residues Gly-78 and 231–233 (HDT) each bind substrate. The active-site Proton acceptor is Asp-232. An ATP-binding site is contributed by Thr-254. Asn-291 lines the substrate pocket. Residue Gln-299 participates in ATP binding. Cys-348 and Cys-365 are oxidised to a cystine. Gly-397 provides a ligand contact to ATP. A disulfide bridge connects residues Cys-408 and Cys-412.

Belongs to the rhamnulokinase family. Mg(2+) is required as a cofactor.

It carries out the reaction L-rhamnulose + ATP = L-rhamnulose 1-phosphate + ADP + H(+). It participates in carbohydrate degradation; L-rhamnose degradation; glycerone phosphate from L-rhamnose: step 2/3. Involved in the catabolism of L-rhamnose (6-deoxy-L-mannose). Catalyzes the transfer of the gamma-phosphate group from ATP to the 1-hydroxyl group of L-rhamnulose to yield L-rhamnulose 1-phosphate. The sequence is that of Rhamnulokinase from Yersinia pestis bv. Antiqua (strain Angola).